The sequence spans 308 residues: Ornithine carbamoyltransferase (308 aa).

Residues S56–T59, Q83, R107, and H134–Q137 each bind carbamoyl phosphate. L-ornithine contacts are provided by residues N165, D225, and S229–M230. Carbamoyl phosphate-binding positions include C266–L267 and R294.

The protein belongs to the aspartate/ornithine carbamoyltransferase superfamily. OTCase family.

Its subcellular location is the cytoplasm. It catalyses the reaction carbamoyl phosphate + L-ornithine = L-citrulline + phosphate + H(+). It functions in the pathway amino-acid biosynthesis; L-arginine biosynthesis; L-arginine from L-ornithine and carbamoyl phosphate: step 1/3. Its function is as follows. Reversibly catalyzes the transfer of the carbamoyl group from carbamoyl phosphate (CP) to the N(epsilon) atom of ornithine (ORN) to produce L-citrulline. This Cereibacter sphaeroides (strain ATCC 17029 / ATH 2.4.9) (Rhodobacter sphaeroides) protein is Ornithine carbamoyltransferase.